The primary structure comprises 319 residues: Taste receptor type 2 member 7 (319 aa).

Over 1-9 (MADKVQTTL) the chain is Extracellular. A helical transmembrane segment spans residues 10 to 30 (LFLAVGEFSVGILGNAFIGLV). At 31-55 (NCMDWVKKRKIASIDLILTSLAISR) the chain is on the cytoplasmic side. A helical membrane pass occupies residues 56–76 (ICLLCVILLDCFILVLYPDVY). Over 77 to 94 (ATGKEMRIIDFFWTLTNH) the chain is Extracellular. The chain crosses the membrane as a helical span at residues 95 to 115 (LSIWFATCLSIYYXFRIANFF). Over 116 to 128 (HPLFLWMKWRIDR) the chain is Cytoplasmic. A helical membrane pass occupies residues 129-149 (VISWILLGCVVLSVFISLPAT). Topologically, residues 150–187 (ENLNADFRFCVKAKRKTNLTWSCRVNKTQHASTKLFLN) are extracellular. 2 N-linked (GlcNAc...) asparagine glycosylation sites follow: Asn-167 and Asn-175. The helical transmembrane segment at 188–208 (LATLLPFCVCLMSFFLLILSL) threads the bilayer. Over 209 to 235 (RRHIRRMQLSATGCRDPSTEAHVRALK) the chain is Cytoplasmic. A helical transmembrane segment spans residues 236–256 (AVISFLLLFIAYYLSFLVATS). Over 257-266 (SYFMPETELA) the chain is Extracellular. Residues 267–287 (VIFGESIALIYPSSHSFILIL) form a helical membrane-spanning segment. Residues 288–319 (GNNKLRHASLKVIWKVMSILKGRKFQQHKQIG) lie on the Cytoplasmic side of the membrane.

It belongs to the G-protein coupled receptor T2R family.

The protein resides in the membrane. Gustducin-coupled receptor implicated in the perception of bitter compounds in the oral cavity and the gastrointestinal tract. Signals through PLCB2 and the calcium-regulated cation channel TRPM5. The sequence is that of Taste receptor type 2 member 7 (TAS2R7) from Pan troglodytes (Chimpanzee).